Consider the following 182-residue polypeptide: Ribosome maturation factor RimM (182 aa).

Residues Gly-103–Phe-182 form the PRC barrel domain.

The protein belongs to the RimM family. In terms of assembly, binds ribosomal protein uS19.

The protein resides in the cytoplasm. An accessory protein needed during the final step in the assembly of 30S ribosomal subunit, possibly for assembly of the head region. Essential for efficient processing of 16S rRNA. May be needed both before and after RbfA during the maturation of 16S rRNA. It has affinity for free ribosomal 30S subunits but not for 70S ribosomes. This chain is Ribosome maturation factor RimM, found in Serratia proteamaculans (strain 568).